The following is a 1038-amino-acid chain: Protein argonaute 1D (1038 aa).

Disordered regions lie at residues 1–58 (MGSR…GAAP) and 110–134 (APHE…PRSL). Gly residues-rich tracts occupy residues 18-29 (RGGGRGGGGRGR) and 43-52 (GHGGRGGAGY). A compositionally biased stretch (low complexity) spans 115–134 (PANVSSPEAASPEASSPRSL). The region spanning 380 to 493 (PVIDFVIQLL…LPMEVCKIVE (114 aa)) is the PAZ domain. Residues 669–990 (LLIGLLPDNN…AAFRARFYME (322 aa)) form the Piwi domain. Residues 992–1021 (DSSDSGSMASGRGGGSSTSRSTRAAGGGAV) form a disordered region.

The protein belongs to the argonaute family. Ago subfamily.

Functionally, probably involved in the RNA silencing pathway. May bind to short RNAs such as microRNAs (miRNAs) or short interfering RNAs (siRNAs), and represses the translation of mRNAs which are complementary to them. The chain is Protein argonaute 1D (AGO1D) from Oryza sativa subsp. japonica (Rice).